A 792-amino-acid chain; its full sequence is Lon protease (792 aa).

One can recognise a Lon N-terminal domain in the interval 16 to 211 (DAVVVVPVSN…KVSAFLAQRL (196 aa)). Position 361 to 368 (361 to 368 (GPPGVGKT)) interacts with ATP. The Lon proteolytic domain occupies 597-778 (TSVPGVATGL…EDAIEAGLDP (182 aa)). Residues serine 684 and lysine 727 contribute to the active site.

This sequence belongs to the peptidase S16 family. Homohexamer. Organized in a ring with a central cavity.

The protein resides in the cytoplasm. The enzyme catalyses Hydrolysis of proteins in presence of ATP.. ATP-dependent serine protease that mediates the selective degradation of mutant and abnormal proteins as well as certain short-lived regulatory proteins. Required for cellular homeostasis and for survival from DNA damage and developmental changes induced by stress. Degrades polypeptides processively to yield small peptide fragments that are 5 to 10 amino acids long. Binds to DNA in a double-stranded, site-specific manner. This Phenylobacterium zucineum (strain HLK1) protein is Lon protease.